The chain runs to 255 residues: MTIDLNCDLGESFGVWPMGSDAAMIELATSVNIACGFHAGDADTMRKTVDLAGTHGVNIGAHPGYRDLHGFGRRPIAGLTSGEIENLVAYQIGALQAIATMAGHRVTHVKAHGALSNVACEDDMTARAIASAVKAVDPGLVFVVPANSRLVAAGEAAGLPLAHEVFADRAYEDDGSLVSRRKPGAVLHNADEIARRVVTMLQSGEVVSITGKPIRMRMDTVCIHGDTPDAVRIARTLRQALKDNGIAVAPFNLIK.

This sequence belongs to the LamB/PxpA family. As to quaternary structure, forms a complex composed of PxpA, PxpB and PxpC.

The catalysed reaction is 5-oxo-L-proline + ATP + 2 H2O = L-glutamate + ADP + phosphate + H(+). Catalyzes the cleavage of 5-oxoproline to form L-glutamate coupled to the hydrolysis of ATP to ADP and inorganic phosphate. In Nitrobacter winogradskyi (strain ATCC 25391 / DSM 10237 / CIP 104748 / NCIMB 11846 / Nb-255), this protein is 5-oxoprolinase subunit A.